The following is a 257-amino-acid chain: Flavin-dependent thymidylate synthase (257 aa).

In terms of domain architecture, ThyX spans 1 to 202 (MNVKLVSYTR…PRLFRYVGPN (202 aa)). Residues serine 55, 79–81 (RHR), and glutamine 87 contribute to the FAD site. Residues 76–79 (QLVR), 87–91 (QMSHR), and arginine 141 contribute to the dUMP site. The short motif at 79 to 89 (RHRVASYTQMS) is the ThyX motif element. Residues 157 to 159 (NAR) and asparagine 163 contribute to the FAD site. Position 168 (arginine 168) interacts with dUMP. The active-site Involved in ionization of N3 of dUMP, leading to its activation is the arginine 168.

This sequence belongs to the thymidylate synthase ThyX family. Homotetramer. The cofactor is FAD.

It catalyses the reaction dUMP + (6R)-5,10-methylene-5,6,7,8-tetrahydrofolate + NADPH + H(+) = dTMP + (6S)-5,6,7,8-tetrahydrofolate + NADP(+). The protein operates within pyrimidine metabolism; dTTP biosynthesis. Its function is as follows. Catalyzes the reductive methylation of 2'-deoxyuridine-5'-monophosphate (dUMP) to 2'-deoxythymidine-5'-monophosphate (dTMP) while utilizing 5,10-methylenetetrahydrofolate (mTHF) as the methyl donor, and NADPH and FADH(2) as the reductant. This Sulfurisphaera tokodaii (strain DSM 16993 / JCM 10545 / NBRC 100140 / 7) (Sulfolobus tokodaii) protein is Flavin-dependent thymidylate synthase.